The chain runs to 340 residues: Ketol-acid reductoisomerase (NADP(+)) (340 aa).

A KARI N-terminal Rossmann domain is found at 1-183; it reads MAITVYYDKD…GGGRTGIIET (183 aa). NADP(+) contacts are provided by residues 26-29, Arg49, Ser52, Ser54, and 84-87; these read FGSQ and DEIQ. Residue His109 is part of the active site. Gly135 provides a ligand contact to NADP(+). The region spanning 184–329 is the KARI C-terminal knotted domain; that stretch reads TFKAETETDL…RNLRAMMPWI (146 aa). Asp192, Glu196, Glu228, and Glu232 together coordinate Mg(2+). Position 253 (Ser253) interacts with substrate.

The protein belongs to the ketol-acid reductoisomerase family. Mg(2+) serves as cofactor.

It catalyses the reaction (2R)-2,3-dihydroxy-3-methylbutanoate + NADP(+) = (2S)-2-acetolactate + NADPH + H(+). It carries out the reaction (2R,3R)-2,3-dihydroxy-3-methylpentanoate + NADP(+) = (S)-2-ethyl-2-hydroxy-3-oxobutanoate + NADPH + H(+). Its pathway is amino-acid biosynthesis; L-isoleucine biosynthesis; L-isoleucine from 2-oxobutanoate: step 2/4. The protein operates within amino-acid biosynthesis; L-valine biosynthesis; L-valine from pyruvate: step 2/4. In terms of biological role, involved in the biosynthesis of branched-chain amino acids (BCAA). Catalyzes an alkyl-migration followed by a ketol-acid reduction of (S)-2-acetolactate (S2AL) to yield (R)-2,3-dihydroxy-isovalerate. In the isomerase reaction, S2AL is rearranged via a Mg-dependent methyl migration to produce 3-hydroxy-3-methyl-2-ketobutyrate (HMKB). In the reductase reaction, this 2-ketoacid undergoes a metal-dependent reduction by NADPH to yield (R)-2,3-dihydroxy-isovalerate. The protein is Ketol-acid reductoisomerase (NADP(+)) of Campylobacter jejuni subsp. jejuni serotype O:2 (strain ATCC 700819 / NCTC 11168).